The chain runs to 298 residues: Mitochondrial dicarboxylate transporter (298 aa).

Solcar repeat units follow at residues 11 to 95, 103 to 195, and 205 to 289; these read KNIK…LKEN, TNMA…FKNY, and SKNY…LKKH. The next 6 helical transmembrane spans lie at 17–37, 58–76, 105–126, 170–189, 211–231, and 265–283; these read WWYGGAAGIFATMVTHPLDLA, ILANEGVVGLYSGLSAAVL, MAYLLPCSMFSGAIGGLAGNFA, GWKPNMVRGILMTASQVVTY, LTASLLAGLVATTVCSPADVM, and WLPSFTRLGPFTMLIFFAI.

The protein belongs to the mitochondrial carrier (TC 2.A.29) family. Homodimer. Binds to the TIM22 translocation complex during import.

Its subcellular location is the mitochondrion inner membrane. Functionally, mitochondrial dicarboxylic transporter catalyzing the exchange of dicarboxylic acids like malate and succinate for inorganic phosphate. Required for growth on ethanol and acetate. The polypeptide is Mitochondrial dicarboxylate transporter (DIC1) (Saccharomyces cerevisiae (strain ATCC 204508 / S288c) (Baker's yeast)).